A 339-amino-acid polypeptide reads, in one-letter code: DNA-directed RNA polymerase subunit alpha (339 aa).

An alpha N-terminal domain (alpha-NTD) region spans residues 1–233; the sequence is MVREEVAGST…DLFLPFLHAE (233 aa). The alpha C-terminal domain (alpha-CTD) stretch occupies residues 264–339; the sequence is KKGIPLNYIF…IDLLKNKLSF (76 aa).

This sequence belongs to the RNA polymerase alpha chain family. As to quaternary structure, in plastids the minimal PEP RNA polymerase catalytic core is composed of four subunits: alpha, beta, beta', and beta''. When a (nuclear-encoded) sigma factor is associated with the core the holoenzyme is formed, which can initiate transcription.

The protein localises to the plastid. Its subcellular location is the chloroplast. It carries out the reaction RNA(n) + a ribonucleoside 5'-triphosphate = RNA(n+1) + diphosphate. Its function is as follows. DNA-dependent RNA polymerase catalyzes the transcription of DNA into RNA using the four ribonucleoside triphosphates as substrates. In Psathyrostachys rupestris (Hordeum rupestre), this protein is DNA-directed RNA polymerase subunit alpha.